The chain runs to 209 residues: Ribosomal RNA large subunit methyltransferase E (209 aa).

S-adenosyl-L-methionine contacts are provided by glycine 63, tryptophan 65, aspartate 83, aspartate 99, and aspartate 124. Lysine 164 functions as the Proton acceptor in the catalytic mechanism.

Belongs to the class I-like SAM-binding methyltransferase superfamily. RNA methyltransferase RlmE family.

The protein resides in the cytoplasm. The enzyme catalyses uridine(2552) in 23S rRNA + S-adenosyl-L-methionine = 2'-O-methyluridine(2552) in 23S rRNA + S-adenosyl-L-homocysteine + H(+). In terms of biological role, specifically methylates the uridine in position 2552 of 23S rRNA at the 2'-O position of the ribose in the fully assembled 50S ribosomal subunit. The chain is Ribosomal RNA large subunit methyltransferase E from Vibrio cholerae serotype O1 (strain ATCC 39541 / Classical Ogawa 395 / O395).